The sequence spans 82 residues: uncharacterized protein (82 aa).

2 helical membrane-spanning segments follow: residues 32–52 (PFSI…IGIL) and 59–79 (SKPL…FNII).

It is found in the cell membrane. This is an uncharacterized protein from Rickettsia prowazekii (strain Madrid E).